The chain runs to 592 residues: A-type ATP synthase subunit A (592 aa).

Glycine 233–threonine 240 lines the ATP pocket.

It belongs to the ATPase alpha/beta chains family. As to quaternary structure, has multiple subunits with at least A(3), B(3), C, D, E, F, H, I and proteolipid K(x).

It is found in the cell membrane. It carries out the reaction ATP + H2O + 4 H(+)(in) = ADP + phosphate + 5 H(+)(out). In terms of biological role, component of the A-type ATP synthase that produces ATP from ADP in the presence of a proton gradient across the membrane. The A chain is the catalytic subunit. This Saccharolobus solfataricus (strain ATCC 35092 / DSM 1617 / JCM 11322 / P2) (Sulfolobus solfataricus) protein is A-type ATP synthase subunit A.